The following is a 437-amino-acid chain: Histidinol dehydrogenase (437 aa).

The NAD(+) site is built by Y133, Q191, and N214. The substrate site is built by S240, Q262, and H265. Zn(2+)-binding residues include Q262 and H265. Residues E329 and H330 each act as proton acceptor in the active site. The substrate site is built by H330, D363, E417, and H422. D363 provides a ligand contact to Zn(2+). H422 provides a ligand contact to Zn(2+).

Belongs to the histidinol dehydrogenase family. In terms of assembly, homodimer. Zn(2+) is required as a cofactor.

The catalysed reaction is L-histidinol + 2 NAD(+) + H2O = L-histidine + 2 NADH + 3 H(+). It functions in the pathway amino-acid biosynthesis; L-histidine biosynthesis; L-histidine from 5-phospho-alpha-D-ribose 1-diphosphate: step 9/9. Catalyzes the sequential NAD-dependent oxidations of L-histidinol to L-histidinaldehyde and then to L-histidine. This Blochmanniella floridana protein is Histidinol dehydrogenase.